The primary structure comprises 69 residues: uncharacterized protein (69 aa).

2 consecutive transmembrane segments (helical) span residues 15 to 35 and 36 to 56; these read LIIGLLCVIGIVMLNGLICYV and LYIIAVPSLLYGIGAFIIPKT.

The protein localises to the cell membrane. This is an uncharacterized protein from Methanocaldococcus jannaschii (strain ATCC 43067 / DSM 2661 / JAL-1 / JCM 10045 / NBRC 100440) (Methanococcus jannaschii).